A 294-amino-acid polypeptide reads, in one-letter code: Ribosomal protein L11 methyltransferase (294 aa).

Thr147, Gly169, Asp191, and Asn231 together coordinate S-adenosyl-L-methionine.

This sequence belongs to the methyltransferase superfamily. PrmA family.

It localises to the cytoplasm. The catalysed reaction is L-lysyl-[protein] + 3 S-adenosyl-L-methionine = N(6),N(6),N(6)-trimethyl-L-lysyl-[protein] + 3 S-adenosyl-L-homocysteine + 3 H(+). Its function is as follows. Methylates ribosomal protein L11. The sequence is that of Ribosomal protein L11 methyltransferase from Dichelobacter nodosus (strain VCS1703A).